A 97-amino-acid polypeptide reads, in one-letter code: Co-chaperonin GroES (97 aa).

It belongs to the GroES chaperonin family. In terms of assembly, heptamer of 7 subunits arranged in a ring. Interacts with the chaperonin GroEL.

It localises to the cytoplasm. Its function is as follows. Together with the chaperonin GroEL, plays an essential role in assisting protein folding. The GroEL-GroES system forms a nano-cage that allows encapsulation of the non-native substrate proteins and provides a physical environment optimized to promote and accelerate protein folding. GroES binds to the apical surface of the GroEL ring, thereby capping the opening of the GroEL channel. The protein is Co-chaperonin GroES of Burkholderia vietnamiensis.